A 541-amino-acid chain; its full sequence is Cytochrome bc1 complex cytochrome b subunit (541 aa).

A helical membrane pass occupies residues 36–56 (FLLGEIALYSFIILILTGVYL). Positions 105 and 119 each coordinate heme. 3 helical membrane-spanning segments follow: residues 109-129 (ALMF…TGAF), 137-157 (WVIG…GYSL), and 169-189 (IMSA…WMIF). Heme is bound by residues histidine 206 and histidine 221. A run of 5 helical transmembrane segments spans residues 207–227 (VLII…LVWY), 256–276 (SVAF…VTTI), 325–345 (VFWV…YPWI), 371–391 (LGVM…NDIW), and 408–428 (IGLI…CIGL).

The protein belongs to the cytochrome b family. In terms of assembly, the cytochrome bc1 complex is composed of a cytochrome b (QcrB), the Rieske protein iron-sulfur (QcrA) and a diheme cytochrome c (QcrC) subunit. Requires heme as cofactor.

Its subcellular location is the cell membrane. The enzyme catalyses a quinol + 2 Fe(III)-[cytochrome c](out) = a quinone + 2 Fe(II)-[cytochrome c](out) + 2 H(+)(out). Its function is as follows. Cytochrome b subunit of the cytochrome bc1 complex, an essential component of the respiratory electron transport chain required for ATP synthesis. The bc1 complex catalyzes the oxidation of menaquinol and the reduction of cytochrome c in the respiratory chain. The bc1 complex operates through a Q-cycle mechanism that couples electron transfer to generation of the proton gradient that drives ATP synthesis. The sequence is that of Cytochrome bc1 complex cytochrome b subunit (qcrB) from Corynebacterium efficiens (strain DSM 44549 / YS-314 / AJ 12310 / JCM 11189 / NBRC 100395).